The primary structure comprises 1465 residues: DNA polymerase alpha catalytic subunit (1465 aa).

2 disordered regions span residues Gly20 to Glu39 and Leu105 to Thr135. Over residues Arg26–Lys35 the composition is skewed to basic residues. Phosphothreonine is present on Thr180. Phosphoserine occurs at positions 192 and 215. Lys230 is subject to N6-acetyllysine. The interval Asp261–Arg297 is disordered. Basic and acidic residues-rich tracts occupy residues Asp265–Val274 and Pro285–Arg297. The tract at residues Arg654–Ile719 is DNA-binding. Lys974 carries the post-translational modification N6-succinyllysine. The tract at residues Gln1249 to Lys1380 is DNA-binding. Zn(2+) contacts are provided by Cys1287, Cys1290, Cys1314, Cys1319, Cys1352, Cys1357, Cys1375, and Cys1378. A CysA-type zinc finger spans residues Cys1287 to Val1317. Positions Cys1352 to Cys1378 match the CysB motif motif.

The protein belongs to the DNA polymerase type-B family. As to quaternary structure, component of the alpha DNA polymerase complex (also known as the alpha DNA polymerase-primase complex) consisting of four subunits: the catalytic subunit POLA1, the regulatory subunit POLA2, and the primase complex subunits PRIM1 and PRIM2 respectively. Within the complex, POLA1 directly interacts with PRIM2. Interacts with PARP1; this interaction functions as part of the control of replication fork progression. Interacts with MCM10 and WDHD1; these interactions recruit the polymerase alpha complex to the pre-replicative complex bound to DNA. Interacts with RPA1; this interaction stabilizes the replicative complex and reduces the misincorporation rate of DNA polymerase alpha by acting as a fidelity clamp. As to expression, expressed in those zones containing proliferating cells in the developing embryonic neocortex, as well as in the lateral and medial ganglionic eminences. After birth, expressed in cells that remain proliferating in the ventricular and subventricular zone of the striatum.

The protein resides in the nucleus. It localises to the cytoplasm. The protein localises to the cytosol. It carries out the reaction DNA(n) + a 2'-deoxyribonucleoside 5'-triphosphate = DNA(n+1) + diphosphate. Functionally, catalytic subunit of the DNA polymerase alpha complex (also known as the alpha DNA polymerase-primase complex) which plays an essential role in the initiation of DNA synthesis. During the S phase of the cell cycle, the DNA polymerase alpha complex (composed of a catalytic subunit POLA1, a regulatory subunit POLA2 and two primase subunits PRIM1 and PRIM2) is recruited to DNA at the replicative forks via direct interactions with MCM10 and WDHD1. The primase subunit of the polymerase alpha complex initiates DNA synthesis by oligomerising short RNA primers on both leading and lagging strands. These primers are initially extended by the polymerase alpha catalytic subunit and subsequently transferred to polymerase delta and polymerase epsilon for processive synthesis on the lagging and leading strand, respectively. The reason this transfer occurs is because the polymerase alpha has limited processivity and lacks intrinsic 3' exonuclease activity for proofreading error, and therefore is not well suited for replicating long complexes. In the cytosol, responsible for a substantial proportion of the physiological concentration of cytosolic RNA:DNA hybrids, which are necessary to prevent spontaneous activation of type I interferon responses. In Mus musculus (Mouse), this protein is DNA polymerase alpha catalytic subunit (Pola1).